The chain runs to 302 residues: S-adenosylmethionine sensor upstream of mTORC1 (302 aa).

Positions 73, 132, and 150 each coordinate S-adenosyl-L-homocysteine. The S-adenosyl-L-methionine site is built by Arg-73, Gly-132, Asp-150, Leu-151, Asp-162, Phe-163, and Ser-196. Residues Asp-162, Phe-163, and Ser-196 each coordinate S-adenosyl-L-homocysteine.

It belongs to the BMT2/SAMTOR family.

Functionally, S-adenosyl-L-methionine-binding protein. It is unclear whether this protein acts as a sensor of S-adenosyl-L-methionine to signal methionine sufficiency to mTORC1. Probably acts as a S-adenosyl-L-methionine-dependent methyltransferase. In Drosophila melanogaster (Fruit fly), this protein is S-adenosylmethionine sensor upstream of mTORC1.